A 630-amino-acid polypeptide reads, in one-letter code: NUAK family SNF1-like kinase 2 (630 aa).

The residue at position 1 (Met-1) is an N-acetylmethionine. Residues 57 to 307 (YEFLETLGKG…LEDVASHWWV (251 aa)) form the Protein kinase domain. ATP is bound by residues 63-71 (LGKGTYGKV) and Lys-85. Catalysis depends on Asp-179, which acts as the Proton acceptor. Thr-212 carries the post-translational modification Phosphothreonine. Disordered regions lie at residues 361 to 504 (HVPG…RLHR) and 521 to 566 (GTAP…LDLP). Residues 464-476 (SGYYSSPEPSESG) show a composition bias toward low complexity. Phosphoserine is present on residues Ser-529, Ser-550, Ser-553, and Ser-579.

The protein belongs to the protein kinase superfamily. CAMK Ser/Thr protein kinase family. SNF1 subfamily. Requires Mg(2+) as cofactor. In terms of processing, phosphorylated at Thr-212 by STK11/LKB1 in complex with STE20-related adapter-alpha (STRADA) pseudo kinase and CAB39. Autophosphorylation is also possible at Thr-212. As to expression, expressed in liver, skin, testis, uterus, ovary, adrenal gland and brain (at protein level). Expressed in kidney, heart, skin, spleen, lung, uterus, liver and the exocrine and endocrine compartments of the human pancreas. A kinase-inactive isoform also appears to be expressed in the skin, spleen, lung, uterus, liver and testis.

The catalysed reaction is L-seryl-[protein] + ATP = O-phospho-L-seryl-[protein] + ADP + H(+). The enzyme catalyses L-threonyl-[protein] + ATP = O-phospho-L-threonyl-[protein] + ADP + H(+). With respect to regulation, activated by phosphorylation on Thr-212 by STK11 in complex with STE20-related adapter-alpha (STRAD alpha) pseudo kinase and CAB39. Its function is as follows. Stress-activated kinase involved in tolerance to glucose starvation. Induces cell-cell detachment by increasing F-actin conversion to G-actin. Expression is induced by CD95 or TNF-alpha, via NF-kappa-B. Protects cells from CD95-mediated apoptosis and is required for the increased motility and invasiveness of CD95-activated tumor cells. Phosphorylates LATS1 and LATS2. Plays a key role in neural tube closure during embryonic development through LATS2 phosphorylation and regulation of the nuclear localization of YAP1 a critical downstream regulatory target in the Hippo signaling pathway. The chain is NUAK family SNF1-like kinase 2 from Rattus norvegicus (Rat).